We begin with the raw amino-acid sequence, 194 residues long: Cupin-domain-containing oxidoreductase virC (194 aa).

In terms of domain architecture, Cupin type-2 spans 106–175 (IDFAPNVISP…GTLPGRMMWV (70 aa)).

It belongs to the virC family.

It functions in the pathway secondary metabolite biosynthesis. Its function is as follows. Cupin-domain-containing oxidoreductase; part of the gene cluster that mediates the biosynthesis of virensols and trichoxide, fungal natural products that contain or are derived from a salicylaldehyde core. The pathway begins with the synthesis of the reduced chain in virensol C by the highly reducing polyketide synthase virA via condensation of one acetate and 8 malonate units. VirA has interesting programming rules since the first 2 ketides are fully reduced, the 3 following ketides undergo beta-dehydration, and the last 3 ketides are only reduced to beta-hydroxys to yield the trihydroxy portion. The production of aldehyde virensol C by virA alone is surprising, since virA does not contain a reductase (R) domain that is typically associated with reductive product release in HRPKS. The cupin-domain enzyme virC is involved in enhancing virA product turnover. The short-chain dehydrogenase virB then oxidizes the C-7 alcohol of virensol C to a ketone, yielding virensol D. Virensol D is further transformed to salicylaldehyde 5-deoxyaurocitrin by the short-chain dehydrogenase virD. VirD catalyzes the dehydrogenation of C-3 to form the beta-ketone aldehyde, which is followed by the generation of the nucleophilic C-2 that is required for the intramolecular aldol condensation between C-2 and C-7, itself followed by dehydration and aromatization which leads to salicylaldehyde 5-deoxyaurocitrin. While the dehydrogenation of virensol D is definitely catalyzed by virD, the aldol condensation and dehydration may be uncatalyzed or assisted by virD. The short chain dehydrogenase virG then converts salicylaldehyde 5-deoxyaurocitrin into virensol B which is further hydroxylated by the cytochrome P450 monooxygenase virE to yield the hydroquinone virensol A. VirI then may oxidize virensol A to form the quinone, while virH performs the epoxidation. Finally, the two remaining short-chain dehydrogenases, virK and virL, are probably responsible for reducing the ketones to the corresponding alcohols to furnish the epoxycyclohexanol structure in trichoxide. This chain is Cupin-domain-containing oxidoreductase virC, found in Hypocrea virens (strain Gv29-8 / FGSC 10586) (Gliocladium virens).